A 295-amino-acid chain; its full sequence is Small ribosomal subunit biogenesis GTPase RsgA (295 aa).

A CP-type G domain is found at 68–228 (KNLLTKPHVA…VVDTPGFANL (161 aa)). Residues 117–120 (NKMD) and 170–178 (GLSGVGKSS) contribute to the GTP site. Residues Cys250, Cys255, His257, and Cys263 each coordinate Zn(2+).

The protein belongs to the TRAFAC class YlqF/YawG GTPase family. RsgA subfamily. In terms of assembly, monomer. Associates with 30S ribosomal subunit, binds 16S rRNA. Zn(2+) is required as a cofactor.

The protein localises to the cytoplasm. In terms of biological role, one of several proteins that assist in the late maturation steps of the functional core of the 30S ribosomal subunit. Helps release RbfA from mature subunits. May play a role in the assembly of ribosomal proteins into the subunit. Circularly permuted GTPase that catalyzes slow GTP hydrolysis, GTPase activity is stimulated by the 30S ribosomal subunit. The protein is Small ribosomal subunit biogenesis GTPase RsgA of Thermotoga maritima (strain ATCC 43589 / DSM 3109 / JCM 10099 / NBRC 100826 / MSB8).